Reading from the N-terminus, the 168-residue chain is Ubiquitin-fold modifier-conjugating enzyme 1 (168 aa).

The active-site Glycyl thioester intermediate is the C116.

The protein belongs to the ubiquitin-conjugating enzyme family. UFC1 subfamily.

E2-like enzyme which forms an intermediate with UFM1 via a thioester linkage. This is Ubiquitin-fold modifier-conjugating enzyme 1 from Trichoplax adhaerens (Trichoplax reptans).